An 85-amino-acid polypeptide reads, in one-letter code: MSSGGLLLLLGLLTLCAELIPVSSRQRHRDCDKPPDKGNCGPVRRAFYYDTRLKTCKAFQYRGCNGNGNHFKSDHLCRCECLEYS.

The N-terminal stretch at 1–24 (MSSGGLLLLLGLLTLCAELIPVSS) is a signal peptide. One can recognise a BPTI/Kunitz inhibitor domain in the interval 31–81 (CDKPPDKGNCGPVRRAFYYDTRLKTCKAFQYRGCNGNGNHFKSDHLCRCEC). Disulfide bonds link cysteine 31/cysteine 81, cysteine 40/cysteine 64, and cysteine 56/cysteine 77.

It belongs to the venom Kunitz-type family. Heterodimer; disulfide-linked. The A chains have phospholipase A2 activity and the B chains show homology with the basic protease inhibitors. As to expression, expressed by the venom gland.

The protein resides in the secreted. Its function is as follows. Beta-bungarotoxins are presynaptic neurotoxins of the venom. The B chain is homologous to venom basic protease inhibitors but has no protease inhibitor activity and blocks voltage-gated potassium channels (Kv). The protein is Kunitz-type serine protease inhibitor homolog beta-bungarotoxin B3 chain of Bungarus multicinctus (Many-banded krait).